A 564-amino-acid polypeptide reads, in one-letter code: Mitochondrial distribution and morphology protein 34 (564 aa).

Positions 1 to 208 (MAFNFNWSPL…VPEYRDRESE (208 aa)) constitute an SMP-LTD domain. Disordered regions lie at residues 208-240 (ESVN…NALN), 336-397 (SGGS…SAPT), 404-423 (QFSE…PQND), 434-517 (RISQ…DPRQ), and 532-564 (IQEE…AYGH). The segment covering 209–219 (SVNTLDQSSGP) has biased composition (polar residues). Over residues 351 to 365 (SGRHPRPHGKKRKKR) the composition is skewed to basic residues. The span at 366-376 (VVDLRRPKTTD) shows a compositional bias: basic and acidic residues. Over residues 380–390 (SVSGESVFSSE) the composition is skewed to low complexity. Composition is skewed to polar residues over residues 438–462 (GEHT…SRNS) and 477–503 (PRNS…SSAI).

Belongs to the MDM34 family. In terms of assembly, component of the ER-mitochondria encounter structure (ERMES) or MDM complex, composed of mmm1, mdm10, mdm12 and mdm34.

Its subcellular location is the mitochondrion outer membrane. In terms of biological role, component of the ERMES/MDM complex, which serves as a molecular tether to connect the endoplasmic reticulum (ER) and mitochondria. Components of this complex are involved in the control of mitochondrial shape and protein biogenesis, and function in nonvesicular lipid trafficking between the ER and mitochondria. Mdm34 is required for the interaction of the ER-resident membrane protein mmm1 and the outer mitochondrial membrane-resident beta-barrel protein mdm10. The chain is Mitochondrial distribution and morphology protein 34 from Talaromyces stipitatus (strain ATCC 10500 / CBS 375.48 / QM 6759 / NRRL 1006) (Penicillium stipitatum).